We begin with the raw amino-acid sequence, 153 residues long: Bacteriohemerythrin (153 aa).

Positions 21, 57, 61, 76, 80, 115, and 120 each coordinate Fe cation.

Belongs to the hemerythrin family. As to quaternary structure, monomer.

Oxygen-binding protein. May be involved in a storage mechanism or for delivery to oxygen-requiring enzymes. The oxygen-binding site contains two iron atoms. The polypeptide is Bacteriohemerythrin (Stenotrophomonas maltophilia (strain R551-3)).